A 1631-amino-acid chain; its full sequence is ABC transporter A family member 6 (1631 aa).

7 helical membrane-spanning segments follow: residues 25–45, 242–262, 285–305, 317–337, 346–366, 372–392, and 416–436; these read ICCEIVFPIVIIGVLFAILAL, SVFITAALMMFSFRLVTDVVI, SWIITSLITSLPVTLLIVVIF, GIVIITFVLYLITLLLLSFIF, FCGLLSFVIVIAINICGIFVS, VSVKLLLSIFSPIAFSNSIYI, and ILMLGIDIIIYIILIWYFEKV. The ABC transporter 1 domain maps to 491-724; the sequence is ISIRNLRKEF…FGQGYLLTCN (234 aa). Residue 527-534 participates in ATP binding; the sequence is GPNGCGKS. The next 7 membrane-spanning stretches (helical) occupy residues 866–886, 1047–1067, 1099–1119, 1127–1147, 1158–1178, 1198–1218, and 1242–1262; these read SFFLSIILPMALIIGSIILYK, AIIYFVFILMAGFSLMAGSFA, WDFFFAFIISILSCSILAGVI, FGSFLLCLILLSCAIIPLGYL, AVGAITAILFVFGLVFTIASL, IIDLIFSIISPIFALNRIVFI, and LGTPLIVLAGHAVLWNVWILL. Positions 1309–1544 constitute an ABC transporter 2 domain; sequence IQFKNLHKLF…FGAGYSIDVK (236 aa). 1347-1354 lines the ATP pocket; that stretch reads GLNGGGKS.

It belongs to the ABC transporter superfamily. ABCA family.

The protein localises to the membrane. The chain is ABC transporter A family member 6 (abcA6) from Dictyostelium discoideum (Social amoeba).